The chain runs to 933 residues: 2-oxoglutarate dehydrogenase E1 component (933 aa).

It belongs to the alpha-ketoglutarate dehydrogenase family. As to quaternary structure, homodimer. Part of the 2-oxoglutarate dehydrogenase (OGDH) complex composed of E1 (2-oxoglutarate dehydrogenase), E2 (dihydrolipoamide succinyltransferase) and E3 (dihydrolipoamide dehydrogenase); the complex contains multiple copies of the three enzymatic components (E1, E2 and E3). Thiamine diphosphate is required as a cofactor.

It catalyses the reaction N(6)-[(R)-lipoyl]-L-lysyl-[protein] + 2-oxoglutarate + H(+) = N(6)-[(R)-S(8)-succinyldihydrolipoyl]-L-lysyl-[protein] + CO2. Functionally, E1 component of the 2-oxoglutarate dehydrogenase (OGDH) complex which catalyzes the decarboxylation of 2-oxoglutarate, the first step in the conversion of 2-oxoglutarate to succinyl-CoA and CO(2). The polypeptide is 2-oxoglutarate dehydrogenase E1 component (Staphylococcus saprophyticus subsp. saprophyticus (strain ATCC 15305 / DSM 20229 / NCIMB 8711 / NCTC 7292 / S-41)).